The primary structure comprises 428 residues: Glutamyl-tRNA reductase (428 aa).

Residues 50–53 (TCNR), Ser110, 115–117 (ETQ), and Gln121 contribute to the substrate site. Cys51 (nucleophile) is an active-site residue. NADP(+) is bound at residue 190-195 (GAGEMG).

This sequence belongs to the glutamyl-tRNA reductase family. As to quaternary structure, homodimer.

It catalyses the reaction (S)-4-amino-5-oxopentanoate + tRNA(Glu) + NADP(+) = L-glutamyl-tRNA(Glu) + NADPH + H(+). It participates in porphyrin-containing compound metabolism; protoporphyrin-IX biosynthesis; 5-aminolevulinate from L-glutamyl-tRNA(Glu): step 1/2. Functionally, catalyzes the NADPH-dependent reduction of glutamyl-tRNA(Glu) to glutamate 1-semialdehyde (GSA). The polypeptide is Glutamyl-tRNA reductase (Campylobacter curvus (strain 525.92)).